A 156-amino-acid polypeptide reads, in one-letter code: Small ribosomal subunit protein uS7 (156 aa).

Belongs to the universal ribosomal protein uS7 family. In terms of assembly, part of the 30S ribosomal subunit. Contacts proteins S9 and S11.

Its function is as follows. One of the primary rRNA binding proteins, it binds directly to 16S rRNA where it nucleates assembly of the head domain of the 30S subunit. Is located at the subunit interface close to the decoding center, probably blocks exit of the E-site tRNA. This Bacillus velezensis (strain DSM 23117 / BGSC 10A6 / LMG 26770 / FZB42) (Bacillus amyloliquefaciens subsp. plantarum) protein is Small ribosomal subunit protein uS7.